A 394-amino-acid chain; its full sequence is MSDTIVIVDAGRTAIGTFGGALSALQATDIGTTVLKALIERTGIAPEQVSEVILGQVLTAGCGQNPARQTTLMAGLPHTVPAMTINKVCGSGLKAVHLAMQAVACGDAEIVIAGGQESMSQSSHVLPRSREGQRMGDWPMKDTMIVDGLWDAFNQCHMGVTAENIAKKYAFTREAQDAFAAASQQKAEAAIQSGRFADEIIPVSIPQRKGDPLVFDTDEFPRPGTTAETLGRLRPAFDKQGTVTAGNASGINDGAAMVVVMKESKAKELGLTPMARLVAFSSAGVDPAIMGTGPIPASTDCLKKAGWAPADLDLVEANEAFAAQAMSVNQEMGWDLSKVNVNGGAIAIGHPIGASGARVLVTLLYEMQKRDAKKGLATLCIGGGQGVALAVERL.

The active-site Acyl-thioester intermediate is Cys-89. Active-site proton acceptor residues include His-350 and Cys-380.

Belongs to the thiolase-like superfamily. Thiolase family. Homotetramer.

The protein resides in the cytoplasm. It catalyses the reaction 2 acetyl-CoA = acetoacetyl-CoA + CoA. The protein operates within biopolymer metabolism; poly-(R)-3-hydroxybutanoate biosynthesis. Its pathway is metabolic intermediate biosynthesis; (R)-mevalonate biosynthesis; (R)-mevalonate from acetyl-CoA: step 1/3. This is Acetyl-CoA acetyltransferase from Thiocystis violacea.